Reading from the N-terminus, the 501-residue chain is ATP synthase subunit alpha (501 aa).

169–176 (GDRQTGKT) is a binding site for ATP.

The protein belongs to the ATPase alpha/beta chains family. In terms of assembly, F-type ATPases have 2 components, CF(1) - the catalytic core - and CF(0) - the membrane proton channel. CF(1) has five subunits: alpha(3), beta(3), gamma(1), delta(1), epsilon(1). CF(0) has three main subunits: a(1), b(2) and c(9-12). The alpha and beta chains form an alternating ring which encloses part of the gamma chain. CF(1) is attached to CF(0) by a central stalk formed by the gamma and epsilon chains, while a peripheral stalk is formed by the delta and b chains.

It localises to the cell membrane. It carries out the reaction ATP + H2O + 4 H(+)(in) = ADP + phosphate + 5 H(+)(out). Produces ATP from ADP in the presence of a proton gradient across the membrane. The alpha chain is a regulatory subunit. This chain is ATP synthase subunit alpha, found in Streptococcus pyogenes serotype M2 (strain MGAS10270).